The sequence spans 186 residues: ATP synthase subunit delta (186 aa).

Belongs to the ATPase delta chain family. F-type ATPases have 2 components, F(1) - the catalytic core - and F(0) - the membrane proton channel. F(1) has five subunits: alpha(3), beta(3), gamma(1), delta(1), epsilon(1). CF(0) has four main subunits: a(1), b(1), b'(1) and c(10-14). The alpha and beta chains form an alternating ring which encloses part of the gamma chain. F(1) is attached to F(0) by a central stalk formed by the gamma and epsilon chains, while a peripheral stalk is formed by the delta, b and b' chains.

The protein resides in the cell inner membrane. F(1)F(0) ATP synthase produces ATP from ADP in the presence of a proton or sodium gradient. F-type ATPases consist of two structural domains, F(1) containing the extramembraneous catalytic core and F(0) containing the membrane proton channel, linked together by a central stalk and a peripheral stalk. During catalysis, ATP synthesis in the catalytic domain of F(1) is coupled via a rotary mechanism of the central stalk subunits to proton translocation. In terms of biological role, this protein is part of the stalk that links CF(0) to CF(1). It either transmits conformational changes from CF(0) to CF(1) or is implicated in proton conduction. The chain is ATP synthase subunit delta from Cereibacter sphaeroides (strain ATCC 17029 / ATH 2.4.9) (Rhodobacter sphaeroides).